The sequence spans 271 residues: Structure-specific endonuclease subunit SLX1 (271 aa).

One can recognise a GIY-YIG domain in the interval 9-94 (RFFGVYLLYC…PQASRRLTHV (86 aa)). Residues 182 to 234 (CTLCARMLQDEEGPLCCPHPGCPLRAHIICLAEEFLQEEPGQLLPLEGHCPSC) form an SLX1-type zinc finger.

The protein belongs to the SLX1 family. In terms of assembly, forms a heterodimer with SLX4. The cofactor is a divalent metal cation.

Its subcellular location is the nucleus. Its function is as follows. Catalytic subunit of the SLX1-SLX4 structure-specific endonuclease that resolves DNA secondary structures generated during DNA repair and recombination. Has endonuclease activity towards branched DNA substrates, introducing single-strand cuts in duplex DNA close to junctions with ss-DNA. Has a preference for 5'-flap structures, and promotes symmetrical cleavage of static and migrating Holliday junctions (HJs). Resolves HJs by generating two pairs of ligatable, nicked duplex products. The protein is Structure-specific endonuclease subunit SLX1 (Slx1b) of Rattus norvegicus (Rat).